We begin with the raw amino-acid sequence, 454 residues long: Argininosuccinate synthase (454 aa).

Residues 17–25 and A43 each bind ATP; that span reads AFSGGLDTS. Y99 contacts L-citrulline. ATP-binding residues include G129 and T131. Positions 131, 135, and 136 each coordinate L-aspartate. Position 135 (N135) interacts with L-citrulline. D136 contributes to the ATP binding site. Residues R139 and S192 each coordinate L-citrulline. D194 contacts ATP. The L-citrulline site is built by T201, E203, and E280.

Belongs to the argininosuccinate synthase family. Type 2 subfamily. Homotetramer.

The protein resides in the cytoplasm. It catalyses the reaction L-citrulline + L-aspartate + ATP = 2-(N(omega)-L-arginino)succinate + AMP + diphosphate + H(+). The protein operates within amino-acid biosynthesis; L-arginine biosynthesis; L-arginine from L-ornithine and carbamoyl phosphate: step 2/3. The polypeptide is Argininosuccinate synthase (Yersinia enterocolitica serotype O:8 / biotype 1B (strain NCTC 13174 / 8081)).